Reading from the N-terminus, the 578-residue chain is Polypeptide N-acetylgalactosaminyltransferase 4 (578 aa).

Topologically, residues 1-12 are cytoplasmic; the sequence is MAVRWTWAGKSC. Residues 13–35 form a helical; Signal-anchor for type II membrane protein membrane-spanning segment; the sequence is LLLALLTLAYILVEFSVSTLYAS. At 36–578 the chain is on the lumenal side; the sequence is PGAGGARELG…DKNQLWRFEK (543 aa). 5 disulfides stabilise this stretch: C124–C357, C348–C421, C457–C477, C503–C518, and C547–C565. The segment at 134–243 is catalytic subdomain A; it reads LPTTSVIIAF…TGWLEPLLER (110 aa). Substrate-binding residues include D175 and R204. Positions 227 and 229 each coordinate Mn(2+). The catalytic subdomain B stretch occupies residues 303-365; it reads PIRSPTMAGG…PCSHVGHVFP (63 aa). Substrate is bound at residue W334. H362 is a binding site for Mn(2+). Position 370 (Y370) interacts with substrate. The Ricin B-type lectin domain occupies 444-577; sequence WHGAIRSMGI…LDKNQLWRFE (134 aa). N471 carries N-linked (GlcNAc...) asparagine glycosylation.

It belongs to the glycosyltransferase 2 family. GalNAc-T subfamily. Mn(2+) is required as a cofactor. Highly expressed in sublingual gland, stomach, colon, small intestine and cervix. Expressed at intermediate levels in kidney, ovary, lung and uterus. Weakly expressed in spleen, liver, heart and brain. Not expressed in submandibular and parotid glands, skeletal muscle and testis.

It is found in the golgi apparatus membrane. The enzyme catalyses L-seryl-[protein] + UDP-N-acetyl-alpha-D-galactosamine = a 3-O-[N-acetyl-alpha-D-galactosaminyl]-L-seryl-[protein] + UDP + H(+). It carries out the reaction L-threonyl-[protein] + UDP-N-acetyl-alpha-D-galactosamine = a 3-O-[N-acetyl-alpha-D-galactosaminyl]-L-threonyl-[protein] + UDP + H(+). Its pathway is protein modification; protein glycosylation. Functionally, catalyzes the initial reaction in O-linked oligosaccharide biosynthesis, the transfer of an N-acetyl-D-galactosamine residue to a serine or threonine residue on the protein receptor. Has a highest activity toward EA2 peptide substrate and a much lower activity with EPO-T, Muc2, Muc1a, Muc1b. This is Polypeptide N-acetylgalactosaminyltransferase 4 (Galnt4) from Mus musculus (Mouse).